Reading from the N-terminus, the 458-residue chain is UDP-N-acetylmuramoylalanine--D-glutamate ligase (458 aa).

Residue 124-130 (GSDGKTT) participates in ATP binding.

Belongs to the MurCDEF family.

It localises to the cytoplasm. The catalysed reaction is UDP-N-acetyl-alpha-D-muramoyl-L-alanine + D-glutamate + ATP = UDP-N-acetyl-alpha-D-muramoyl-L-alanyl-D-glutamate + ADP + phosphate + H(+). It participates in cell wall biogenesis; peptidoglycan biosynthesis. In terms of biological role, cell wall formation. Catalyzes the addition of glutamate to the nucleotide precursor UDP-N-acetylmuramoyl-L-alanine (UMA). This Clostridium botulinum (strain ATCC 19397 / Type A) protein is UDP-N-acetylmuramoylalanine--D-glutamate ligase.